We begin with the raw amino-acid sequence, 84 residues long: MATGTDQVVGLGLVALSLIIFTYYTAWVILLPFIDSQHVIHKYFLPRAYAIAIPLAAGHLLLLFVGIFITYVMLKNQNDTKKTQ.

The next 2 helical transmembrane spans lie at 11 to 31 and 49 to 69; these read LGLVALSLIIFTYYTAWVILL and YAIAIPLAAGHLLLLFVGIFI.

It belongs to the DPM2 family. Component of the dolichol-phosphate mannose (DPM) synthase complex composed of DPM1, DPM2 and DPM3; in the complex interacts directly with DPM3. Component of the glycosylphosphatidylinositol-N-acetylglucosaminyltransferase (GPI-GnT) complex composed at least by PIGA, PIGC, PIGH, PIGP, PIGQ, PIGY and DPM2. Interacts with PIGA, PIGC and PIGQ.

The protein localises to the endoplasmic reticulum membrane. The protein operates within protein modification; protein glycosylation. Regulates the biosynthesis of dolichol phosphate-mannose. Regulatory subunit of the dolichol-phosphate mannose (DPM) synthase complex; essential for the ER localization and stable expression of DPM1. Part of the glycosylphosphatidylinositol-N-acetylglucosaminyltransferase (GPI-GnT) complex that catalyzes the transfer of N-acetylglucosamine from UDP-N-acetylglucosamine to phosphatidylinositol and participates in the first step of GPI biosynthesis. May act by regulating the GPI-GNT complex. The polypeptide is Dolichol phosphate-mannose biosynthesis regulatory protein (Bos taurus (Bovine)).